Reading from the N-terminus, the 205-residue chain is Probable nicotinate-nucleotide adenylyltransferase (205 aa).

This sequence belongs to the NadD family.

The enzyme catalyses nicotinate beta-D-ribonucleotide + ATP + H(+) = deamido-NAD(+) + diphosphate. The protein operates within cofactor biosynthesis; NAD(+) biosynthesis; deamido-NAD(+) from nicotinate D-ribonucleotide: step 1/1. In terms of biological role, catalyzes the reversible adenylation of nicotinate mononucleotide (NaMN) to nicotinic acid adenine dinucleotide (NaAD). This chain is Probable nicotinate-nucleotide adenylyltransferase, found in Arthrobacter sp. (strain FB24).